We begin with the raw amino-acid sequence, 500 residues long: MASILTTTEAQTRRREQYHEADVVVVGAGVFGCTMAFALANQGRSVLLLERWLKEPDRIVGELLQPGGVASLQKLGLGHCVEGIDAKPCYGYTIFYHGEKVLVPYPGIDDEGSPTHAWGGHSTGDRSTRPSGCSFHHGRFINKLRESCIAHKNITVVETEVVKTLRGEVSDQILGVESRTMNKETGKKEQDYYFGQLTIIADGYDSKWRQEVLKTKPKVCSKFYALELIDCDLPQPGHGHVIIGNAFPILLYQIGTHETRALIDVPQGIPEASPENGGVRGYIRNFVLPALPPSIRPSAEKALEDGKIPRSMPNSWLPPTKQRANGAILLGDAMNMRHPLTGGGMTVAFNDVVILSELLHPDKVGDLGDSKLINNALEELYWRRKPLTGIINVLAQALYSLFAANDRQLRALQYGCFTYFKNGDTDGPVALLAGILQRPFILAYHFFSVAFLAIWLNACSVVGCGILGIFKFPLAIIDAVLILWKACIVFIPIMWRESFQ.

A helical transmembrane segment spans residues 20–40; sequence EADVVVVGAGVFGCTMAFALA. FAD-binding positions include 30–31, 50–51, Arg-58, Arg-145, Asp-332, and Met-345; these read VF and ER. 2 helical membrane-spanning segments follow: residues 450-470 and 474-494; these read AFLA…LGIF and LAII…IPIM.

This sequence belongs to the squalene monooxygenase family. The cofactor is FAD.

It localises to the microsome membrane. It is found in the endoplasmic reticulum membrane. Its subcellular location is the lipid droplet. The catalysed reaction is squalene + reduced [NADPH--hemoprotein reductase] + O2 = (S)-2,3-epoxysqualene + oxidized [NADPH--hemoprotein reductase] + H2O + H(+). The protein operates within terpene metabolism; lanosterol biosynthesis; lanosterol from farnesyl diphosphate: step 2/3. It participates in steroid metabolism; ergosterol biosynthesis. In terms of biological role, squalene epoxidase; part of the third module of ergosterol biosynthesis pathway that includes the late steps of the pathway. ERG1 catalyzes the epoxidation of squalene into 2,3-epoxysqualene. The third module or late pathway involves the ergosterol synthesis itself through consecutive reactions that mainly occur in the endoplasmic reticulum (ER) membrane. Firstly, the squalene synthase ERG9 catalyzes the condensation of 2 farnesyl pyrophosphate moieties to form squalene, which is the precursor of all steroids. Squalene synthase is crucial for balancing the incorporation of farnesyl diphosphate (FPP) into sterol and nonsterol isoprene synthesis. Secondly, squalene is converted into lanosterol by the consecutive action of the squalene epoxidase ERG1 and the lanosterol synthase ERG7. Then, the delta(24)-sterol C-methyltransferase ERG6 methylates lanosterol at C-24 to produce eburicol. Eburicol is the substrate of the sterol 14-alpha demethylase encoded by CYP51A, CYP51B and CYP51C, to yield 4,4,24-trimethyl ergosta-8,14,24(28)-trienol. CYP51B encodes the enzyme primarily responsible for sterol 14-alpha-demethylation, and plays an essential role in ascospore formation. CYP51A encodes an additional sterol 14-alpha-demethylase, induced on ergosterol depletion and responsible for the intrinsic variation in azole sensitivity. The third CYP51 isoform, CYP51C, does not encode a sterol 14-alpha-demethylase, but is required for full virulence on host wheat ears. The C-14 reductase ERG24 then reduces the C14=C15 double bond which leads to 4,4-dimethylfecosterol. A sequence of further demethylations at C-4, involving the C-4 demethylation complex containing the C-4 methylsterol oxidases ERG25, the sterol-4-alpha-carboxylate 3-dehydrogenase ERG26 and the 3-keto-steroid reductase ERG27, leads to the production of fecosterol via 4-methylfecosterol. ERG28 has a role as a scaffold to help anchor ERG25, ERG26 and ERG27 to the endoplasmic reticulum. The C-8 sterol isomerase ERG2 then catalyzes the reaction which results in unsaturation at C-7 in the B ring of sterols and thus converts fecosterol to episterol. The sterol-C5-desaturases ERG3A and ERG3BB then catalyze the introduction of a C-5 double bond in the B ring to produce 5-dehydroepisterol. The C-22 sterol desaturases ERG5A and ERG5B further convert 5-dehydroepisterol into ergosta-5,7,22,24(28)-tetraen-3beta-ol by forming the C-22(23) double bond in the sterol side chain. Finally, ergosta-5,7,22,24(28)-tetraen-3beta-ol is substrate of the C-24(28) sterol reductase ERG4 to produce ergosterol. This is Squalene epoxidase ERG1 from Gibberella zeae (strain ATCC MYA-4620 / CBS 123657 / FGSC 9075 / NRRL 31084 / PH-1) (Wheat head blight fungus).